Reading from the N-terminus, the 460-residue chain is C4-dicarboxylate transport transcriptional regulatory protein DctD (460 aa).

The region spanning 6-120 is the Response regulatory domain; the sequence is SVFLIDDDRD…RLVQSARRAE (115 aa). Asp55 carries the post-translational modification 4-aspartylphosphate. The Sigma-54 factor interaction domain maps to 145–374; the sequence is LIGQTPVMER…LSHFAERVAL (230 aa). Residues 173 to 180 and 236 to 245 each bind ATP; these read GETGSGKE and ASGGTLFLDE. The segment at 332–345 is inter-domain linker; it reads ARASERFGREVPAI. A DNA-binding region (H-T-H motif) is located at residues 417–436; that stretch reads VKETLQALGIPRKTFYDKLQ.

In terms of processing, phosphorylated by DctB.

The protein localises to the cytoplasm. In terms of biological role, member of the two-component regulatory system DctB/DctD involved in the transport of C4-dicarboxylates. When activated by DctB acts in conjunction with sigma-54 to activate the transcription of dctA. This Rhizobium meliloti (strain 1021) (Ensifer meliloti) protein is C4-dicarboxylate transport transcriptional regulatory protein DctD (dctD).